The following is a 347-amino-acid chain: NADH-ubiquinone oxidoreductase chain 2 (347 aa).

Helical transmembrane passes span 4 to 21 (LALI…VIVM), 26 to 44 (WLLV…IPVL), 59 to 79 (YFLT…TNLL), 93 to 115 (LAST…HFWV), 149 to 169 (LNLN…GWGG), 178 to 198 (ILAY…TYNP), 200 to 220 (LTLL…MLFM), 241 to 261 (ATSV…SGFL), 274 to 294 (ESIF…YFYM), and 323 to 343 (TPLL…APIL).

Belongs to the complex I subunit 2 family. As to quaternary structure, core subunit of respiratory chain NADH dehydrogenase (Complex I) which is composed of 45 different subunits. Interacts with TMEM242.

It is found in the mitochondrion inner membrane. The catalysed reaction is a ubiquinone + NADH + 5 H(+)(in) = a ubiquinol + NAD(+) + 4 H(+)(out). Functionally, core subunit of the mitochondrial membrane respiratory chain NADH dehydrogenase (Complex I) which catalyzes electron transfer from NADH through the respiratory chain, using ubiquinone as an electron acceptor. Essential for the catalytic activity and assembly of complex I. This is NADH-ubiquinone oxidoreductase chain 2 from Cardioderma cor (Heart-nosed bat).